The following is a 358-amino-acid chain: MKAAKACIDLSALQHNLQRVKAQAPESKVMAVVKANGYGHGLRHVAKHANHADAFGVARIEEALQLRACGVVKPILLLEGFYSPGDLPVLVTNNIQTVVHCEEQLIALEQADLETPVVVWLKIDSGMHRLGVRPEQYDEFISRLKTCPNVAKPLRYMSHFGCADELDSSITPQQIELFMSLTSGCQGERSLAASAGLLAWPQSQLEWVRPGIIMYGVSPFSDKTAQDLGYQPVMTLKSHLIAVREVKQGESVGYGGIWTSERDTKVGVIAVGYGDGYPRSAPNGTPVWVNGRTVPIAGRVSMDMLTVDLGPDATDKVSDEAILWGKELPVEEVANHIGTIAYELVTKLTPRVEMEYTK.

Lys34 functions as the Proton acceptor; specific for D-alanine in the catalytic mechanism. At Lys34 the chain carries N6-(pyridoxal phosphate)lysine. Arg129 provides a ligand contact to substrate. Tyr254 serves as the catalytic Proton acceptor; specific for L-alanine. Met302 serves as a coordination point for substrate.

The protein belongs to the alanine racemase family. It depends on pyridoxal 5'-phosphate as a cofactor.

The catalysed reaction is L-alanine = D-alanine. It participates in amino-acid biosynthesis; D-alanine biosynthesis; D-alanine from L-alanine: step 1/1. Its function is as follows. Catalyzes the interconversion of L-alanine and D-alanine. May also act on other amino acids. The chain is Alanine racemase (alr) from Vibrio parahaemolyticus serotype O3:K6 (strain RIMD 2210633).